A 1188-amino-acid chain; its full sequence is uncharacterized protein (1188 aa).

Disordered stretches follow at residues 126–468, 484–771, 790–823, and 847–1039; these read GDLR…SQME, EDRF…LYKP, ARGGAAGPGEPVEVKEPPGLPAKPPASAQPTDEL, and QRAQ…FSRF. Composition is skewed to pro residues over residues 139 to 151, 159 to 193, and 208 to 240; these read IPPPPPGPAPGPP, GGSPLPSPPSTAPPPPPLLLEPPPPPSMAPPPPPV, and IPTPPDFIPPAPPLAFLAPPPPPVPAPAPPAPA. The residue at position 260 (S260) is a Phosphoserine. Residues 322-331 are compositionally biased toward basic and acidic residues; that stretch reads EAPRKEEGAT. Residues 389-418 show a composition bias toward pro residues; sequence TPPPAPPLPPPAPPLPPPAPPLPPAAPPLP. Over residues 432–441 the composition is skewed to low complexity; the sequence is KTPKSSSPAL. Composition is skewed to basic and acidic residues over residues 501-514 and 566-583; these read KEGKKGPRLPEKET and IRNELEARLSSAAEKEAK. A compositionally biased stretch (low complexity) spans 618–633; that stretch reads LPPQSTTLLPTTSLQP. Residues 640-652 are compositionally biased toward pro residues; it reads AIPPKATPEPAIP. T666 is subject to Phosphothreonine. Residues 689–703 are compositionally biased toward low complexity; sequence PAIASTATTLPTTTS. Polar residues predominate over residues 875 to 893; that stretch reads AEASSDSIFHSQGTPNSFT. The span at 920-931 shows a compositional bias: basic and acidic residues; sequence LGRDAEGTELSR. Over residues 986–1001 the composition is skewed to pro residues; sequence IPPPPEFSNDPEPPAP. Residues 1007 to 1019 show a composition bias toward polar residues; that stretch reads GRQSSPPRNNYSD. Low complexity predominate over residues 1026-1035; sequence AGPGAPPALG. The residue at position 1044 (R1044) is an Asymmetric dimethylarginine. The segment at 1069-1160 is disordered; that stretch reads GEPHRGPGLP…SPYTTTRYGS (92 aa). 2 positions are modified to omega-N-methylarginine: R1073 and R1084. R1157 bears the Asymmetric dimethylarginine mark.

This is an uncharacterized protein from Homo sapiens (Human).